Reading from the N-terminus, the 518-residue chain is Ribonuclease Y (518 aa).

Residues 2 to 22 form a helical membrane-spanning segment; sequence GSIIISALLALVIGAVVGFFV. The 64-residue stretch at 208–271 folds into the KH domain; that stretch reads TVSVVNLPND…ETARIALDKL (64 aa). Residues 334 to 427 form the HD domain; the sequence is VLKHSVEVAF…VAAADALSAA (94 aa).

It belongs to the RNase Y family.

The protein resides in the cell membrane. Endoribonuclease that initiates mRNA decay. The chain is Ribonuclease Y from Geobacillus thermodenitrificans (strain NG80-2).